The sequence spans 201 residues: B-cell CLL/lymphoma 7 protein family member B-B (201 aa).

The disordered stretch occupies residues 104–201 (QSNTKVDSSS…VCTEHNSTVS (98 aa)).

This sequence belongs to the BCL7 family.

This Danio rerio (Zebrafish) protein is B-cell CLL/lymphoma 7 protein family member B-B.